A 626-amino-acid polypeptide reads, in one-letter code: Chaperone protein HtpG (626 aa).

The a; substrate-binding stretch occupies residues 1 to 341 (METKQFKAES…SEDLSLNISR (341 aa)). The b stretch occupies residues 342–552 (EILQHDRQLK…EGELSIEMEK (211 aa)). The disordered stretch occupies residues 490–509 (DLGIEGEEKENTSSSDDKEN). Over residues 498-509 (KENTSSSDDKEN) the composition is skewed to basic and acidic residues. A c region spans residues 553–626 (VLNAMPNNQN…FTNNICKIMK (74 aa)).

It belongs to the heat shock protein 90 family. Homodimer.

It localises to the cytoplasm. Functionally, molecular chaperone. Has ATPase activity. The protein is Chaperone protein HtpG of Clostridium botulinum (strain Okra / Type B1).